A 135-amino-acid chain; its full sequence is Putative pre-16S rRNA nuclease (135 aa).

The protein belongs to the YqgF nuclease family.

The protein localises to the cytoplasm. Functionally, could be a nuclease involved in processing of the 5'-end of pre-16S rRNA. The polypeptide is Putative pre-16S rRNA nuclease (Clostridium acetobutylicum (strain ATCC 824 / DSM 792 / JCM 1419 / IAM 19013 / LMG 5710 / NBRC 13948 / NRRL B-527 / VKM B-1787 / 2291 / W)).